Here is a 188-residue protein sequence, read N- to C-terminus: Archaemetzincin (188 aa).

His-137 lines the Zn(2+) pocket. The active-site Proton acceptor is the Glu-138. Positions 141, 147, 148, 153, 172, and 175 each coordinate Zn(2+).

This sequence belongs to the peptidase M54 family. In terms of assembly, monomer. It depends on Zn(2+) as a cofactor.

Probable zinc metalloprotease whose natural substrate is unknown. This is Archaemetzincin from Pyrococcus horikoshii (strain ATCC 700860 / DSM 12428 / JCM 9974 / NBRC 100139 / OT-3).